A 195-amino-acid chain; its full sequence is UMP-CMP kinase (195 aa).

Gly17 to Thr22 contributes to the ATP binding site. The NMP stretch occupies residues Ser37–Val66. Residues Arg43, Glu64 to Val66, and Gly91 to Arg94 each bind a ribonucleoside 5'-phosphate. Residue Asn98 participates in CMP binding. The tract at residues Lys131–Asp141 is LID. Position 132 (Arg132) interacts with ATP. Residues Arg138 and Arg149 each coordinate a ribonucleoside 5'-phosphate. Residue Arg177 coordinates ATP.

It belongs to the adenylate kinase family. UMP-CMP kinase subfamily. As to quaternary structure, monomer. The cofactor is Mg(2+).

It localises to the cytoplasm. Its subcellular location is the nucleus. The enzyme catalyses CMP + ATP = CDP + ADP. The catalysed reaction is dCMP + ATP = dCDP + ADP. It carries out the reaction UMP + ATP = UDP + ADP. Functionally, catalyzes the phosphorylation of pyrimidine nucleoside monophosphates at the expense of ATP. Plays an important role in de novo pyrimidine nucleotide biosynthesis. Has preference for UMP and CMP as phosphate acceptors. The polypeptide is UMP-CMP kinase (Dictyostelium discoideum (Social amoeba)).